The following is a 389-amino-acid chain: S-adenosylmethionine synthase (389 aa).

Histidine 15 contributes to the ATP binding site. Aspartate 17 is a Mg(2+) binding site. Glutamate 43 serves as a coordination point for K(+). L-methionine is bound by residues glutamate 56 and glutamine 99. The interval 99-109 (QSSDIQYSIDH) is flexible loop. Residues 166-168 (DAK), 232-233 (RF), aspartate 241, 247-248 (RK), serine 264, and lysine 268 each bind ATP. Residue aspartate 241 participates in L-methionine binding. Lysine 272 is a binding site for L-methionine.

The protein belongs to the AdoMet synthase family. As to quaternary structure, homotetramer; dimer of dimers. The cofactor is Mg(2+). K(+) serves as cofactor.

Its subcellular location is the cytoplasm. The catalysed reaction is L-methionine + ATP + H2O = S-adenosyl-L-methionine + phosphate + diphosphate. It participates in amino-acid biosynthesis; S-adenosyl-L-methionine biosynthesis; S-adenosyl-L-methionine from L-methionine: step 1/1. In terms of biological role, catalyzes the formation of S-adenosylmethionine (AdoMet) from methionine and ATP. The overall synthetic reaction is composed of two sequential steps, AdoMet formation and the subsequent tripolyphosphate hydrolysis which occurs prior to release of AdoMet from the enzyme. In Blochmanniella pennsylvanica (strain BPEN), this protein is S-adenosylmethionine synthase.